The chain runs to 357 residues: MDEKEIKFIQDQIGYTFKNQELLVQAFTRRSYSMENGGQDNEVLEFIGDKALDFVVVKQLSEEFGHYSKKYQNWEKWGKTEETGTFISDLDEGELTEIKKQLVQKNTLADAIDNLGIAYYLIMGKGDVEKNIQDSLSVKEDLFEAILGAIALDSNWDIEALQDSMNVMLNPGELMFDEDVNYVAEIQAWSSANSGNIPLHCFYPTSMQGTWYMPRHHMCIYGKAEQDTHFACEVLIPGIDYHFVGYGRSKNLARMDASRLAYEYLKDEDMLFSIRDEIDDPNYNDSIGQLEILARRGYFSIPQYDFKETHDEDGNPVWNCKCSIKEKDTVTNGRSSSKKDAKKQAAYDMLTFVLEEE.

The 150-residue stretch at Ile-6–Asn-155 folds into the RNase III domain. A Mg(2+)-binding site is contributed by Glu-45. The active site involves Asp-49. Residues Asp-141 and Glu-144 each contribute to the Mg(2+) site. Residue Glu-144 is part of the active site. DRBM domains are found at residues Pro-198–Asp-267 and Asp-285–Glu-355.

Belongs to the ribonuclease III family. In terms of assembly, homodimer. Mg(2+) is required as a cofactor.

It localises to the cytoplasm. The catalysed reaction is Endonucleolytic cleavage to 5'-phosphomonoester.. Digests double-stranded RNA. Involved in the processing of primary rRNA transcript to yield the immediate precursors to the large and small rRNAs (23S and 16S). Processes some mRNAs, and tRNAs when they are encoded in the rRNA operon. Processes pre-crRNA and tracrRNA of type II CRISPR loci if present in the organism. This is Ribonuclease 3 (rnc) from Roseburia hominis (strain DSM 16839 / JCM 17582 / NCIMB 14029 / A2-183).